Reading from the N-terminus, the 89-residue chain is Small ribosomal subunit protein uS15 (89 aa).

The protein belongs to the universal ribosomal protein uS15 family. As to quaternary structure, part of the 30S ribosomal subunit. Forms a bridge to the 50S subunit in the 70S ribosome, contacting the 23S rRNA.

Its function is as follows. One of the primary rRNA binding proteins, it binds directly to 16S rRNA where it helps nucleate assembly of the platform of the 30S subunit by binding and bridging several RNA helices of the 16S rRNA. Forms an intersubunit bridge (bridge B4) with the 23S rRNA of the 50S subunit in the ribosome. This Brevibacillus brevis (strain 47 / JCM 6285 / NBRC 100599) protein is Small ribosomal subunit protein uS15.